A 688-amino-acid chain; its full sequence is DNA ligase (688 aa).

Residues 51 to 55, 100 to 101, and Glu-129 each bind NAD(+); these read DSEYD and SL. Lys-131 serves as the catalytic N6-AMP-lysine intermediate. Arg-152, Glu-189, Lys-308, and Lys-332 together coordinate NAD(+). Positions 426, 429, 444, and 450 each coordinate Zn(2+). Residues 609 to 688 enclose the BRCT domain; the sequence is ADEQPLKGQT…DELLALLANS (80 aa).

Belongs to the NAD-dependent DNA ligase family. LigA subfamily. Mg(2+) serves as cofactor. Requires Mn(2+) as cofactor.

It catalyses the reaction NAD(+) + (deoxyribonucleotide)n-3'-hydroxyl + 5'-phospho-(deoxyribonucleotide)m = (deoxyribonucleotide)n+m + AMP + beta-nicotinamide D-nucleotide.. Its function is as follows. DNA ligase that catalyzes the formation of phosphodiester linkages between 5'-phosphoryl and 3'-hydroxyl groups in double-stranded DNA using NAD as a coenzyme and as the energy source for the reaction. It is essential for DNA replication and repair of damaged DNA. The chain is DNA ligase from Shewanella sp. (strain MR-4).